Here is a 346-residue protein sequence, read N- to C-terminus: Centromere protein L (346 aa).

A Phosphoserine modification is found at S41. At T45 the chain carries Phosphothreonine. Position 55 is a phosphoserine (S55).

Belongs to the CENP-L/IML3 family. As to quaternary structure, component of the CENPA-CAD complex, composed of CENPI, CENPK, CENPL, CENPO, CENPP, CENPQ, CENPR and CENPS. The CENPA-CAD complex interacts with the CENPA-NAC complex, at least composed of CENPA, CENPC, CENPH, CENPM, CENPN, CENPT and CENPU.

The protein localises to the nucleus. It localises to the chromosome. It is found in the centromere. Component of the CENPA-CAD (nucleosome distal) complex, a complex recruited to centromeres which is involved in assembly of kinetochore proteins, mitotic progression and chromosome segregation. May be involved in incorporation of newly synthesized CENPA into centromeres via its interaction with the CENPA-NAC complex. This Bos taurus (Bovine) protein is Centromere protein L (CENPL).